Reading from the N-terminus, the 227-residue chain is Isoprenyl transferase (227 aa).

Asp-13 is an active-site residue. A Mg(2+)-binding site is contributed by Asp-13. Residues 14 to 17 (GNGR), Trp-18, Arg-26, His-30, and 58 to 60 (STE) each bind substrate. Asn-61 functions as the Proton acceptor in the catalytic mechanism. Residues Trp-62, Arg-64, Arg-175, and 181–183 (RLS) contribute to the substrate site. Residue Glu-194 coordinates Mg(2+).

It belongs to the UPP synthase family. As to quaternary structure, homodimer. It depends on Mg(2+) as a cofactor.

Its function is as follows. Catalyzes the condensation of isopentenyl diphosphate (IPP) with allylic pyrophosphates generating different type of terpenoids. This Treponema denticola (strain ATCC 35405 / DSM 14222 / CIP 103919 / JCM 8153 / KCTC 15104) protein is Isoprenyl transferase.